We begin with the raw amino-acid sequence, 425 residues long: Serine--tRNA ligase (425 aa).

An L-serine-binding site is contributed by 230–232 (TAE). 261–263 (RSE) lines the ATP pocket. An L-serine-binding site is contributed by E284. Position 348-351 (348-351 (EISS)) interacts with ATP. Residue S384 participates in L-serine binding.

Belongs to the class-II aminoacyl-tRNA synthetase family. Type-1 seryl-tRNA synthetase subfamily. In terms of assembly, homodimer. The tRNA molecule binds across the dimer.

It localises to the cytoplasm. It carries out the reaction tRNA(Ser) + L-serine + ATP = L-seryl-tRNA(Ser) + AMP + diphosphate + H(+). It catalyses the reaction tRNA(Sec) + L-serine + ATP = L-seryl-tRNA(Sec) + AMP + diphosphate + H(+). The protein operates within aminoacyl-tRNA biosynthesis; selenocysteinyl-tRNA(Sec) biosynthesis; L-seryl-tRNA(Sec) from L-serine and tRNA(Sec): step 1/1. In terms of biological role, catalyzes the attachment of serine to tRNA(Ser). Is also able to aminoacylate tRNA(Sec) with serine, to form the misacylated tRNA L-seryl-tRNA(Sec), which will be further converted into selenocysteinyl-tRNA(Sec). This Streptococcus pyogenes serotype M4 (strain MGAS10750) protein is Serine--tRNA ligase.